A 176-amino-acid polypeptide reads, in one-letter code: RNA pyrophosphohydrolase (176 aa).

Residues 6–149 enclose the Nudix hydrolase domain; sequence GYRPNVGIII…KRNVYEMALT (144 aa). The Nudix box motif lies at 38 to 59; that stretch reads GGIKPGESPEAAMYRELMEEVG.

Belongs to the Nudix hydrolase family. RppH subfamily. A divalent metal cation is required as a cofactor.

Accelerates the degradation of transcripts by removing pyrophosphate from the 5'-end of triphosphorylated RNA, leading to a more labile monophosphorylated state that can stimulate subsequent ribonuclease cleavage. In Laribacter hongkongensis (strain HLHK9), this protein is RNA pyrophosphohydrolase.